The primary structure comprises 513 residues: GMP synthase [glutamine-hydrolyzing] (513 aa).

The 191-residue stretch at 5-195 folds into the Glutamine amidotransferase type-1 domain; sequence LVLVIDFGGQ…VYNICGCTGD (191 aa). The Nucleophile role is filled by Cys-82. Catalysis depends on residues His-169 and Glu-171. The region spanning 196-388 is the GMPS ATP-PPase domain; that stretch reads WKMDSFVEKT…LGIPEKLVFR (193 aa). 223–229 contacts ATP; it reads SGGVDSS.

As to quaternary structure, homodimer.

The enzyme catalyses XMP + L-glutamine + ATP + H2O = GMP + L-glutamate + AMP + diphosphate + 2 H(+). It functions in the pathway purine metabolism; GMP biosynthesis; GMP from XMP (L-Gln route): step 1/1. Its function is as follows. Catalyzes the synthesis of GMP from XMP. The chain is GMP synthase [glutamine-hydrolyzing] from Clostridium botulinum (strain Alaska E43 / Type E3).